The following is a 600-amino-acid chain: MIQLSWSSIILESGNVNDYEVVYPQKVPALLKGGVQNPQPETKYEDTMQYEFQVNGEPVVLHLERNKGLFSEDYTETHYAPDGREITTSPPVQDHCYYHGYFQNEADSSAVISACDGLKGHFKLQGEIYFIEPLKISDSEAHAIYKDENVEEEDETPKICGVTDTTWESDEPIKKTSLLTNTPEQDRYLQAEKYIEFYMVVDNIMYRHYKRNQLVIKRKVYEMINTMNMIYRRLNFHIALIGLEIWSNINEINVQSDVKATLDLFGEWREKKLLPRKRNDNAQLLTGIDFNGTPVGLAYIGSICNPKTSAAVVQDYSKSTRMVAITMAHEMGHNLGMNHDKGFCTCGFNKCVMSTRRTKPAYQFSSCSVREHQRYLLRDRPQCILNKPLSTDIVSPPICGNYFVEVGEECDCGSPADCQSACCNATTCKLQHEAQCDSEECCEKCKFKGAGAECRAAKDDCDLPELCTGQSAECPTDVFQRNGLPCQNNGYCYNGKCPIMTNQCIALRGPGVKVSRDSCFTLNQRTRGCGLCRMEYGRKIPCAAKDVKCGRLFCKKRNSMICNCSISPRDPSYGMVEPGTKCGDGMVCSNRQCVDVKTAY.

Positions 1–8 are cleaved as a signal peptide; the sequence is MIQLSWSS. Residues 9 to 179 constitute a propeptide that is removed on maturation; the sequence is IILESGNVND…DEPIKKTSLL (171 aa). One can recognise a Peptidase M12B domain in the interval 193-388; that stretch reads KYIEFYMVVD…DRPQCILNKP (196 aa). The Ca(2+) site is built by glutamate 196 and aspartate 280. 3 disulfide bridges follow: cysteine 304–cysteine 383, cysteine 344–cysteine 367, and cysteine 346–cysteine 351. The Zn(2+) site is built by histidine 329, histidine 333, and histidine 339. Ca(2+) contacts are provided by cysteine 383, asparagine 386, isoleucine 398, asparagine 401, phenylalanine 403, glutamate 405, glutamate 408, and aspartate 411. The Disintegrin domain occupies 396-482; sequence PPICGNYFVE…ECPTDVFQRN (87 aa). 14 disulfides stabilise this stretch: cysteine 399–cysteine 428, cysteine 410–cysteine 423, cysteine 412–cysteine 418, cysteine 422–cysteine 445, cysteine 436–cysteine 442, cysteine 441–cysteine 467, cysteine 454–cysteine 474, cysteine 461–cysteine 492, cysteine 486–cysteine 497, cysteine 504–cysteine 554, cysteine 519–cysteine 562, cysteine 532–cysteine 542, cysteine 549–cysteine 588, and cysteine 582–cysteine 593. N-linked (GlcNAc...) asparagine glycosylation is present at asparagine 424. The D/ECD-tripeptide signature appears at 460–462; it reads DCD. The Ca(2+) site is built by aspartate 462, leucine 463, glutamate 465, aspartate 477, and valine 478.

It belongs to the venom metalloproteinase (M12B) family. P-III subfamily. P-IIIa sub-subfamily. As to quaternary structure, monomer. Requires Zn(2+) as cofactor. As to expression, expressed by the venom gland.

The protein localises to the secreted. Snake venom zinc metalloproteinase that may cleave complement protein C3 into C3c-like (C3o). This Naja kaouthia (Monocled cobra) protein is Zinc metalloproteinase-disintegrin-like cobrin.